We begin with the raw amino-acid sequence, 464 residues long: ATP synthase subunit beta (464 aa).

An ATP-binding site is contributed by 152–159; it reads GGAGVGKT.

The protein belongs to the ATPase alpha/beta chains family. As to quaternary structure, F-type ATPases have 2 components, CF(1) - the catalytic core - and CF(0) - the membrane proton channel. CF(1) has five subunits: alpha(3), beta(3), gamma(1), delta(1), epsilon(1). CF(0) has three main subunits: a(1), b(2) and c(9-12). The alpha and beta chains form an alternating ring which encloses part of the gamma chain. CF(1) is attached to CF(0) by a central stalk formed by the gamma and epsilon chains, while a peripheral stalk is formed by the delta and b chains.

It is found in the cell inner membrane. The enzyme catalyses ATP + H2O + 4 H(+)(in) = ADP + phosphate + 5 H(+)(out). Functionally, produces ATP from ADP in the presence of a proton gradient across the membrane. The catalytic sites are hosted primarily by the beta subunits. The polypeptide is ATP synthase subunit beta (Aliarcobacter butzleri (strain RM4018) (Arcobacter butzleri)).